Reading from the N-terminus, the 332-residue chain is Ferredoxin--NADP reductase (332 aa).

7 residues coordinate FAD: aspartate 33, glutamine 41, tyrosine 46, alanine 86, methionine 121, aspartate 282, and serine 325.

This sequence belongs to the ferredoxin--NADP reductase type 2 family. In terms of assembly, homodimer. FAD serves as cofactor.

The enzyme catalyses 2 reduced [2Fe-2S]-[ferredoxin] + NADP(+) + H(+) = 2 oxidized [2Fe-2S]-[ferredoxin] + NADPH. In Sulfurisphaera tokodaii (strain DSM 16993 / JCM 10545 / NBRC 100140 / 7) (Sulfolobus tokodaii), this protein is Ferredoxin--NADP reductase.